Consider the following 102-residue polypeptide: snRNA-activating protein complex subunit 5 (102 aa).

The span at 73-82 (QTTLKLSTRS) shows a compositional bias: polar residues. The tract at residues 73-102 (QTTLKLSTRSPMEEEEEEEEEEEEEEESDS) is disordered. Residues 85-102 (EEEEEEEEEEEEEEESDS) are compositionally biased toward acidic residues.

As to quaternary structure, part of the SNAPc complex composed of 5 subunits: SNAPC1, SNAPC2, SNAPC3, SNAPC4 and SNAPC5. SNAPC5 interacts with SNAPC4.

It is found in the nucleus. Part of the SNAPc complex required for the transcription of both RNA polymerase II and III small-nuclear RNA genes. Binds to the proximal sequence element (PSE), a non-TATA-box basal promoter element common to these 2 types of genes. Recruits TBP and BRF2 to the U6 snRNA TATA box. This is snRNA-activating protein complex subunit 5 from Mus musculus (Mouse).